A 460-amino-acid chain; its full sequence is Argininosuccinate lyase (460 aa).

This sequence belongs to the lyase 1 family. Argininosuccinate lyase subfamily.

The protein resides in the cytoplasm. The catalysed reaction is 2-(N(omega)-L-arginino)succinate = fumarate + L-arginine. The protein operates within amino-acid biosynthesis; L-arginine biosynthesis; L-arginine from L-ornithine and carbamoyl phosphate: step 3/3. In Streptococcus mutans serotype c (strain ATCC 700610 / UA159), this protein is Argininosuccinate lyase.